The primary structure comprises 705 residues: Elongation factor G (705 aa).

The tr-type G domain occupies 6 to 282 (NKVRNIGIMA…AVVDFLPSPL (277 aa)). GTP is bound by residues 15-22 (AHIDAGKT), 79-83 (DTPGH), and 133-136 (NKMD).

Belongs to the TRAFAC class translation factor GTPase superfamily. Classic translation factor GTPase family. EF-G/EF-2 subfamily.

The protein resides in the cytoplasm. Its function is as follows. Catalyzes the GTP-dependent ribosomal translocation step during translation elongation. During this step, the ribosome changes from the pre-translocational (PRE) to the post-translocational (POST) state as the newly formed A-site-bound peptidyl-tRNA and P-site-bound deacylated tRNA move to the P and E sites, respectively. Catalyzes the coordinated movement of the two tRNA molecules, the mRNA and conformational changes in the ribosome. This Corynebacterium glutamicum (strain ATCC 13032 / DSM 20300 / JCM 1318 / BCRC 11384 / CCUG 27702 / LMG 3730 / NBRC 12168 / NCIMB 10025 / NRRL B-2784 / 534) protein is Elongation factor G.